Reading from the N-terminus, the 310-residue chain is GTPase Era (310 aa).

Positions 17 to 184 (HSGFVALIGA…LDYLAQALPA (168 aa)) constitute an Era-type G domain. The tract at residues 25–32 (GAPNAGKS) is G1. 25 to 32 (GAPNAGKS) provides a ligand contact to GTP. The tract at residues 51–55 (QTTRA) is G2. A G3 region spans residues 72 to 75 (DTPG). GTP-binding positions include 72–76 (DTPGI) and 134–137 (NKVD). Positions 134–137 (NKVD) are G4. The segment at 163 to 165 (VSA) is G5. The KH type-2 domain occupies 215 to 292 (LHQELPYSSH…HLFLFVKVRE (78 aa)).

This sequence belongs to the TRAFAC class TrmE-Era-EngA-EngB-Septin-like GTPase superfamily. Era GTPase family. As to quaternary structure, monomer.

The protein localises to the cytoplasm. It localises to the cell inner membrane. In terms of biological role, an essential GTPase that binds both GDP and GTP, with rapid nucleotide exchange. Plays a role in 16S rRNA processing and 30S ribosomal subunit biogenesis and possibly also in cell cycle regulation and energy metabolism. The protein is GTPase Era of Mesorhizobium japonicum (strain LMG 29417 / CECT 9101 / MAFF 303099) (Mesorhizobium loti (strain MAFF 303099)).